Here is a 488-residue protein sequence, read N- to C-terminus: Ribulose bisphosphate carboxylase large chain 1 (488 aa).

The substrate site is built by Asn-128 and Thr-178. Lys-180 (proton acceptor) is an active-site residue. Residue Lys-182 coordinates substrate. Lys-206, Asp-208, and Glu-209 together coordinate Mg(2+). Lys-206 is subject to N6-carboxylysine. Residue His-298 is the Proton acceptor of the active site. Substrate is bound by residues Arg-299, His-331, and Ser-383.

Belongs to the RuBisCO large chain family. Type I subfamily. As to quaternary structure, heterohexadecamer of 8 large chains and 8 small chains. Mg(2+) serves as cofactor.

It carries out the reaction 2 (2R)-3-phosphoglycerate + 2 H(+) = D-ribulose 1,5-bisphosphate + CO2 + H2O. It catalyses the reaction D-ribulose 1,5-bisphosphate + O2 = 2-phosphoglycolate + (2R)-3-phosphoglycerate + 2 H(+). Functionally, ruBisCO catalyzes two reactions: the carboxylation of D-ribulose 1,5-bisphosphate, the primary event in carbon dioxide fixation, as well as the oxidative fragmentation of the pentose substrate. Both reactions occur simultaneously and in competition at the same active site. The protein is Ribulose bisphosphate carboxylase large chain 1 of Nitrobacter hamburgensis (strain DSM 10229 / NCIMB 13809 / X14).